Here is a 154-residue protein sequence, read N- to C-terminus: 6,7-dimethyl-8-ribityllumazine synthase (154 aa).

5-amino-6-(D-ribitylamino)uracil contacts are provided by residues Phe-22, 57–59, and 81–83; these read VCE and TVI. 86–87 contributes to the (2S)-2-hydroxy-3-oxobutyl phosphate binding site; sequence KT. The Proton donor role is filled by His-89. Residue Val-114 coordinates 5-amino-6-(D-ribitylamino)uracil. Arg-128 contributes to the (2S)-2-hydroxy-3-oxobutyl phosphate binding site.

The protein belongs to the DMRL synthase family. As to quaternary structure, forms an icosahedral capsid composed of 60 subunits, arranged as a dodecamer of pentamers.

The catalysed reaction is (2S)-2-hydroxy-3-oxobutyl phosphate + 5-amino-6-(D-ribitylamino)uracil = 6,7-dimethyl-8-(1-D-ribityl)lumazine + phosphate + 2 H2O + H(+). It participates in cofactor biosynthesis; riboflavin biosynthesis; riboflavin from 2-hydroxy-3-oxobutyl phosphate and 5-amino-6-(D-ribitylamino)uracil: step 1/2. Functionally, catalyzes the formation of 6,7-dimethyl-8-ribityllumazine by condensation of 5-amino-6-(D-ribitylamino)uracil with 3,4-dihydroxy-2-butanone 4-phosphate. This is the penultimate step in the biosynthesis of riboflavin. This is 6,7-dimethyl-8-ribityllumazine synthase from Wigglesworthia glossinidia brevipalpis.